A 127-amino-acid polypeptide reads, in one-letter code: Transcription antitermination protein NusB (127 aa).

This sequence belongs to the NusB family.

In terms of biological role, involved in transcription antitermination. Required for transcription of ribosomal RNA (rRNA) genes. Binds specifically to the boxA antiterminator sequence of the ribosomal RNA (rrn) operons. This chain is Transcription antitermination protein NusB, found in Lysinibacillus sphaericus (strain C3-41).